An 833-amino-acid polypeptide reads, in one-letter code: Leucine--tRNA ligase (833 aa).

The short motif at 41–52 is the 'HIGH' region element; it reads PYPSGAGLHVGH. A 'KMSKS' region motif is present at residues 610–614; the sequence is KMSKS. Lys-613 contributes to the ATP binding site.

The protein belongs to the class-I aminoacyl-tRNA synthetase family.

It localises to the cytoplasm. The catalysed reaction is tRNA(Leu) + L-leucine + ATP = L-leucyl-tRNA(Leu) + AMP + diphosphate. The polypeptide is Leucine--tRNA ligase (Streptococcus equi subsp. equi (strain 4047)).